The chain runs to 911 residues: Protein translocase subunit SecA (911 aa).

Residues Q86, 104 to 108, and D494 each bind ATP; that span reads GEGKT. The tract at residues 856-911 is disordered; sequence VEGIDAPQRPAQLRFTGPSEDGQSAVTRSGTDSGATVAAGTNRRSRRQAERRGRRG. Residues 876–889 are compositionally biased toward polar residues; sequence DGQSAVTRSGTDSG. Over residues 902–911 the composition is skewed to basic and acidic residues; sequence RQAERRGRRG.

This sequence belongs to the SecA family. As to quaternary structure, monomer and homodimer. Part of the essential Sec protein translocation apparatus which comprises SecA, SecYEG and auxiliary proteins SecDF. Other proteins may also be involved.

It localises to the cell membrane. Its subcellular location is the cytoplasm. The catalysed reaction is ATP + H2O + cellular proteinSide 1 = ADP + phosphate + cellular proteinSide 2.. In terms of biological role, part of the Sec protein translocase complex. Interacts with the SecYEG preprotein conducting channel. Has a central role in coupling the hydrolysis of ATP to the transfer of proteins into and across the cell membrane, serving as an ATP-driven molecular motor driving the stepwise translocation of polypeptide chains across the membrane. This chain is Protein translocase subunit SecA, found in Micrococcus luteus (strain ATCC 4698 / DSM 20030 / JCM 1464 / CCM 169 / CCUG 5858 / IAM 1056 / NBRC 3333 / NCIMB 9278 / NCTC 2665 / VKM Ac-2230) (Micrococcus lysodeikticus).